A 475-amino-acid polypeptide reads, in one-letter code: Cytosolic non-specific dipeptidase (475 aa).

An N6-acetyllysine modification is found at K9. S58 carries the phosphoserine modification. H99 is a Mn(2+) binding site. D101 is a catalytic residue. D132 is a Mn(2+) binding site. E166 functions as the Proton acceptor in the catalytic mechanism. Residues 166 to 167 (EE), D195, H228, T330, R343, S417, and H445 contribute to the substrate site. Positions 167 and 195 each coordinate Mn(2+). A Mn(2+)-binding site is contributed by H445.

The protein belongs to the peptidase M20A family. Homodimer. Requires Mn(2+) as cofactor.

It is found in the cytoplasm. The catalysed reaction is Hydrolysis of dipeptides, preferentially hydrophobic dipeptides including prolyl amino acids.. It carries out the reaction L-threonyl-L-threonine + H2O = 2 L-threonine. It catalyses the reaction L-threonyl-L-serine + H2O = L-threonine + L-serine. The enzyme catalyses L-seryl-L-threonine + H2O = L-threonine + L-serine. The catalysed reaction is L-cysteinylglycine + H2O = L-cysteine + glycine. It carries out the reaction L-alanyl-L-cysteine + H2O = L-cysteine + L-alanine. It catalyses the reaction (S)-lactate + L-phenylalanine = N-[(S)-lactoyl]-L-phenylalanine + H2O. Its function is as follows. Catalyzes the peptide bond hydrolysis in dipeptides, displaying a non-redundant activity toward threonyl dipeptides. Mediates threonyl dipeptide catabolism in a tissue-specific way. Has high dipeptidase activity toward cysteinylglycine, an intermediate metabolite in glutathione metabolism. Metabolizes N-lactoyl-amino acids, both through hydrolysis to form lactic acid and amino acids, as well as through their formation by reverse proteolysis. Plays a role in the regulation of cell cycle arrest and apoptosis. This chain is Cytosolic non-specific dipeptidase (CNDP2), found in Bos taurus (Bovine).